The sequence spans 395 residues: S-adenosylmethionine synthase (395 aa).

Histidine 12 provides a ligand contact to ATP. Aspartate 14 contributes to the Mg(2+) binding site. Glutamate 40 contributes to the K(+) binding site. Glutamate 53 and glutamine 96 together coordinate L-methionine. Residues 96 to 106 form a flexible loop region; that stretch reads QSKEIADAVNF. ATP is bound by residues 174–176, 242–243, aspartate 251, 257–258, alanine 274, and lysine 278; these read DGK, RF, and RK. Residue aspartate 251 coordinates L-methionine. Lysine 282 is a binding site for L-methionine.

The protein belongs to the AdoMet synthase family. As to quaternary structure, homotetramer; dimer of dimers. It depends on Mg(2+) as a cofactor. K(+) serves as cofactor.

The protein resides in the cytoplasm. The enzyme catalyses L-methionine + ATP + H2O = S-adenosyl-L-methionine + phosphate + diphosphate. The protein operates within amino-acid biosynthesis; S-adenosyl-L-methionine biosynthesis; S-adenosyl-L-methionine from L-methionine: step 1/1. In terms of biological role, catalyzes the formation of S-adenosylmethionine (AdoMet) from methionine and ATP. The overall synthetic reaction is composed of two sequential steps, AdoMet formation and the subsequent tripolyphosphate hydrolysis which occurs prior to release of AdoMet from the enzyme. The protein is S-adenosylmethionine synthase of Tropheryma whipplei (strain TW08/27) (Whipple's bacillus).